The primary structure comprises 330 residues: uncharacterized protein (330 aa).

The JmjC domain maps to 96-256; the sequence is AALEFDFTDL…LMLAALRKKL (161 aa). Residues His-145, Asp-147, and His-224 each contribute to the Fe cation site.

It belongs to the ROX family. Fe(2+) serves as cofactor.

This is an uncharacterized protein from Bacillus subtilis (strain 168).